Consider the following 1679-residue polypeptide: AF4/FMR2 family member lilli (1679 aa).

Disordered stretches follow at residues 1–21, 55–78, 124–305, 406–539, 580–609, 733–755, 783–1172, and 1197–1319; these read MAQQQQQQLQQQQQHHTSSIN, NYNMEEYERRKRREREKIERQQGI, RSAP…EKDV, LHQL…GAQN, MGAGSGSGGTLSSGGSSSNKTPSPTESNKW, DSGTSASGSSSSSSSSSDSAVGG, QPTQ…TTPH, and TPAQ…LQIG. Residues 69 to 78 are compositionally biased toward basic and acidic residues; the sequence is REKIERQQGI. 2 stretches are compositionally biased toward low complexity: residues 144 to 181 and 212 to 244; these read SLGHSPSSASASAAAGPTSASATTALPGQQQQHYQQQQ and PSSSGMAPPRGPPRSSSSNSNSSSATNNASSGG. T421 is subject to Phosphothreonine. Basic and acidic residues predominate over residues 429-442; it reads LKTEKNHSLEKQDS. Residues 444 to 455 are compositionally biased toward acidic residues; it reads LENDLELSESED. S451 and S453 each carry phosphoserine. Residues 464–484 show a composition bias toward low complexity; that stretch reads SAGNSSNSSESDSSESGSESS. Residues 492-501 show a composition bias toward basic residues; it reads HPNHQQHHHQ. The segment covering 502–532 has biased composition (low complexity); the sequence is LQQQQQQQQQQASMQQQQVLQQQQQHRPQPL. Gly residues predominate over residues 582-591; that stretch reads AGSGSGGTLS. Residues 598–609 show a composition bias toward polar residues; that stretch reads NKTPSPTESNKW. Positions 733 to 752 are enriched in low complexity; the sequence is DSGTSASGSSSSSSSSSDSA. The segment covering 783-796 has biased composition (polar residues); sequence QPTQSQKAPPSNSV. Residues 810 to 820 are compositionally biased toward basic residues; the sequence is QRQKKPRKKKA. Phosphoserine occurs at positions 829 and 830. Positions 859–871 form a DNA-binding region, a.T hook; sequence KKGRGRPRKQQQS. Positions 868–906 are enriched in low complexity; that stretch reads QQQSGGSGNLSSASAGSSSQTKGPTLTAAKKPLAKTPLA. Residues S879 and S881 each carry the phosphoserine modification. Residues 917–927 show a composition bias toward polar residues; that stretch reads SQSSSNGNTPT. Low complexity-rich tracts occupy residues 957 to 973 and 1001 to 1012; these read SSSAESSSKSSSSSSSS and GSGSSSPSSSGS. Positions 1019–1030 are enriched in polar residues; sequence TRSQVGSGQALA. Residues 1042 to 1068 show a composition bias toward low complexity; the sequence is SQHSQHLSSSECSSSSGGCTAVCSSSS. The segment covering 1073-1090 has biased composition (basic and acidic residues); sequence EGRREKERERKPKSDKNK. Over residues 1130–1140 the composition is skewed to pro residues; the sequence is QPPPPQAPPAA. Residues 1198-1213 are compositionally biased toward polar residues; the sequence is PAQQNGHLTPKDQATN. 2 stretches are compositionally biased toward basic and acidic residues: residues 1234–1251 and 1260–1288; these read EHPVKPEPELDAGYEAKF and FQLKQERDRDRERERERERERDREREQPP. The residue at position 1368 (S1368) is a Phosphoserine. Phosphothreonine is present on T1370. A compositionally biased stretch (low complexity) spans 1569–1589; the sequence is GNTPSSISPSNSVGSQGSGSN. The interval 1569 to 1594 is disordered; sequence GNTPSSISPSNSVGSQGSGSNTPPGR.

This sequence belongs to the AF4 family.

It is found in the nucleus. Has a role in transcriptional regulation. Acts in parallel with the Ras/MAPK and the PI3K/PKB pathways in the control of cell identity and cellular growth. Essential for regulation of the cytoskeleton and cell growth but not for cell proliferation or growth rate. Required specifically for the microtubule-based basal transport of lipid droplets. Plays a partially redundant function downstream of Raf in cell fate specification in the developing eye. Pair-rule protein that regulates embryonic cellularization, gastrulation and segmentation. The sequence is that of AF4/FMR2 family member lilli from Drosophila erecta (Fruit fly).